A 61-amino-acid chain; its full sequence is Large ribosomal subunit protein eL29y (61 aa).

The segment at 1 to 61 (MAKSKNHTAH…KSGENAGVEE (61 aa)) is disordered. Positions 15–31 (KAHKNGIKKPRRHRHTP) are enriched in basic residues.

Belongs to the eukaryotic ribosomal protein eL29 family.

This chain is Large ribosomal subunit protein eL29y (RPL29B), found in Arabidopsis thaliana (Mouse-ear cress).